Here is a 1634-residue protein sequence, read N- to C-terminus: DNA polymerase (1634 aa).

2 consecutive DOD-type homing endonuclease domains span residues 552 to 693 and 1163 to 1295; these read LIGI…RLGI and FLGF…LVGI.

Belongs to the DNA polymerase type-B family. This protein undergoes a protein self splicing that involves a post-translational excision of the intervening region (intein) followed by peptide ligation.

The catalysed reaction is DNA(n) + a 2'-deoxyribonucleoside 5'-triphosphate = DNA(n+1) + diphosphate. The sequence is that of DNA polymerase (pol) from Methanocaldococcus jannaschii (strain ATCC 43067 / DSM 2661 / JAL-1 / JCM 10045 / NBRC 100440) (Methanococcus jannaschii).